Reading from the N-terminus, the 588-residue chain is Lamin-B1 (588 aa).

The span at 1 to 12 (MATATPVQQQRA) shows a compositional bias: polar residues. Positions 1–34 (MATATPVQQQRAGSRASAPATPLSPTRLSRLQEK) are disordered. Ala-2 bears the N-acetylalanine mark. The interval 2 to 35 (ATATPVQQQRAGSRASAPATPLSPTRLSRLQEKE) is head. Phosphothreonine occurs at positions 3 and 5. Arg-15 bears the Omega-N-methylarginine mark. Ser-17 carries the phosphoserine modification. Thr-21 is subject to Phosphothreonine. Ser-24 is modified (phosphoserine). Thr-26 carries the phosphothreonine modification. At Ser-29 the chain carries Phosphoserine. An IF rod domain is found at 33–389 (EKEELRELND…KLLEGEEERL (357 aa)). A coil 1A region spans residues 36-70 (ELRELNDRLAVYIDKVRSLETENSALQLQVTEREE). The tract at residues 71–82 (VRGRELTGLKAL) is linker 1. Positions 83–216 (YETELADARR…EFRKNMYEEE (134 aa)) are coil 1B. Lys-103 participates in a covalent cross-link: Glycyl lysine isopeptide (Lys-Gly) (interchain with G-Cter in SUMO2). Residue Lys-112 is modified to N6-acetyllysine. Residue Lys-124 forms a Glycyl lysine isopeptide (Lys-Gly) (interchain with G-Cter in SUMO2) linkage. A Phosphoserine modification is found at Ser-127. A Glycyl lysine isopeptide (Lys-Gly) (interchain with G-Cter in SUMO2) cross-link involves residue Lys-146. Lys-158 is subject to N6-acetyllysine; alternate. Residue Lys-158 forms a Glycyl lysine isopeptide (Lys-Gly) (interchain with G-Cter in SUMO2); alternate linkage. Position 159 is a phosphoserine (Ser-159). A Glycyl lysine isopeptide (Lys-Gly) (interchain with G-Cter in SUMO2) cross-link involves residue Lys-182. Residues Ser-201 and Ser-233 each carry the phosphoserine modification. The segment at 217 to 244 (INETRRKHETRLVEVDSGRQIEYEYKLA) is linker 2. Residues Lys-242 and Lys-262 each participate in a glycyl lysine isopeptide (Lys-Gly) (interchain with G-Cter in SUMO2) cross-link. The tract at residues 245 to 387 (QALHEMREQH…YRKLLEGEEE (143 aa)) is coil 2. N6-acetyllysine; alternate is present on Lys-272. Lys-272 participates in a covalent cross-link: Glycyl lysine isopeptide (Lys-Gly) (interchain with G-Cter in SUMO2); alternate. Phosphoserine is present on residues Ser-279 and Ser-303. Lys-313 participates in a covalent cross-link: Glycyl lysine isopeptide (Lys-Gly) (interchain with G-Cter in SUMO2). Lys-331 carries the post-translational modification N6-acetyllysine; alternate. A Glycyl lysine isopeptide (Lys-Gly) (interchain with G-Cter in SUMO2); alternate cross-link involves residue Lys-331. Phosphoserine occurs at positions 376 and 394. The tail stretch occupies residues 388 to 588 (RLKLSPSPSS…RASNKSCAIM (201 aa)). Low complexity predominate over residues 391–410 (LSPSPSSRVTVSRASSSRSV). Positions 391–433 (LSPSPSSRVTVSRASSSRSVRTTRGKRKRVDVEESEASSSVSI) are disordered. The O-linked (GlcNAc) threonine glycan is linked to Thr-400. Arg-414 carries the omega-N-methylarginine modification. Positions 416–421 (KRKRVD) match the Nuclear localization signal motif. Residues 431 to 547 (VSISHSASAT…EEVAQRSTVF (117 aa)) enclose the LTD domain. Position 484 is an N6-acetyllysine (Lys-484). A Glycyl lysine isopeptide (Lys-Gly) (interchain with G-Cter in SUMO2) cross-link involves residue Lys-533. Ser-535 carries the phosphoserine modification. Lys-548 participates in a covalent cross-link: Glycyl lysine isopeptide (Lys-Gly) (interchain with G-Cter in SUMO2). Cys-585 is modified (cysteine methyl ester). Residue Cys-585 is the site of S-farnesyl cysteine attachment. A propeptide spans 586 to 588 (AIM) (removed in mature form).

It belongs to the intermediate filament family. As to quaternary structure, homodimer. Lamin dimers then assemble into dimeric head-to-tail polymers. Ultimately, two head-to-tail polymers assemble laterally into a protofilament with a uniformly shaped rod of 3.5 nm in diameter. Interacts with SPAG4 and SEPT12. Post-translationally, B-type lamins undergo a series of modifications, such as farnesylation and phosphorylation. Increased phosphorylation of the lamins occurs before envelope disintegration and probably plays a role in regulating lamin associations. In terms of processing, phosphorylation plays a key role in lamin organization, subcellular localization and nuclear envelope disintegration. Phosphorylation by CDK1 at Ser-24 and Ser-394 at the onset of mitosis drives lamin disassembly and nuclear envelope breakdown.

The protein localises to the nucleus lamina. Functionally, lamins are intermediate filament proteins that assemble into a filamentous meshwork, and which constitute the major components of the nuclear lamina, a fibrous layer on the nucleoplasmic side of the inner nuclear membrane. Lamins provide a framework for the nuclear envelope, bridging the nuclear envelope and chromatin, thereby playing an important role in nuclear assembly, chromatin organization, nuclear membrane and telomere dynamics. The structural integrity of the lamina is strictly controlled by the cell cycle, as seen by the disintegration and formation of the nuclear envelope in prophase and telophase, respectively. In Mus musculus (Mouse), this protein is Lamin-B1 (Lmnb1).